Reading from the N-terminus, the 513-residue chain is Activin receptor type-2A (513 aa).

The signal sequence occupies residues 1–19; it reads MGAAAKLAFAVFLISCSSG. Residues 20–135 are Extracellular-facing; sequence AILGRSETQE…TSNPVTPKPP (116 aa). 5 disulfide bridges follow: cysteine 30-cysteine 60, cysteine 50-cysteine 78, cysteine 85-cysteine 104, cysteine 91-cysteine 103, and cysteine 105-cysteine 110. 2 N-linked (GlcNAc...) asparagine glycosylation sites follow: asparagine 43 and asparagine 66. Residues 136–161 form a helical membrane-spanning segment; the sequence is YYNILLYSLVPLMLIAGIVICAFWVY. Residues 162-513 lie on the Cytoplasmic side of the membrane; the sequence is RHHKMAYPPV…VDFPPKESSL (352 aa). The Protein kinase domain maps to 192-485; it reads LQLLEVKARG…GERITQMQRL (294 aa). ATP contacts are provided by residues 198-206 and lysine 219; that span reads KARGRFGCV. Catalysis depends on aspartate 322, which acts as the Proton acceptor.

The protein belongs to the protein kinase superfamily. TKL Ser/Thr protein kinase family. TGFB receptor subfamily. As to quaternary structure, part of a complex consisting of MAGI2/ARIP1, ACVR2A, ACVR1B and SMAD3. Interacts with MAGI2/ARIP1. Interacts with type I receptor ACVR1. Interacts with BMP7. Interacts with TSC22D1/TSC-22. Interacts with activin A/INHBA. Mg(2+) is required as a cofactor. Mn(2+) serves as cofactor.

The protein localises to the cell membrane. The enzyme catalyses L-threonyl-[receptor-protein] + ATP = O-phospho-L-threonyl-[receptor-protein] + ADP + H(+). It carries out the reaction L-seryl-[receptor-protein] + ATP = O-phospho-L-seryl-[receptor-protein] + ADP + H(+). Its function is as follows. On ligand binding, forms a receptor complex consisting of two type II and two type I transmembrane serine/threonine kinases. Type II receptors phosphorylate and activate type I receptors which autophosphorylate, then bind and activate SMAD transcriptional regulators. Receptor for activin A, activin B and inhibin A. Mediates induction of adipogenesis by GDF6. This chain is Activin receptor type-2A (ACVR2A), found in Bos taurus (Bovine).